A 65-amino-acid chain; its full sequence is Metallothionein (65 aa).

It belongs to the metallothionein superfamily. Type 4 family.

Its function is as follows. Metallothioneins have a high content of cysteine residues that bind various heavy metals. The protein is Metallothionein of Paracentrotus lividus (Common sea urchin).